The chain runs to 415 residues: uncharacterized protein (415 aa).

Disordered stretches follow at residues 39-77, 220-247, and 346-415; these read FLPP…RPIH, AEDK…HPLT, and VTLN…NGSK. 3 stretches are compositionally biased toward basic and acidic residues: residues 220–238, 365–380, and 400–415; these read AEDK…ESKN, DVNK…DKHM, and SKTE…NGSK.

This is an uncharacterized protein from Rattus norvegicus (Rat).